A 257-amino-acid polypeptide reads, in one-letter code: (R)-2-haloacid dehalogenase (257 aa).

It belongs to the HAD-like hydrolase superfamily. S-2-haloalkanoic acid dehalogenase family.

It catalyses the reaction an (R)-2-haloacid + H2O = a (2S)-2-hydroxycarboxylate + a halide anion + H(+). In terms of biological role, catalyzes the hydrolytic dehalogenation of small (R)-2-haloalkanoic acids to yield the corresponding (S)-2-hydroxyalkanoic acids. Acts on acids of short chain lengths, C(2) to C(4), with inversion of configuration at C-2. The protein is (R)-2-haloacid dehalogenase (dehI) of Rhizobium sp. (strain NHG3).